The chain runs to 831 residues: Probable DNA-directed RNA polymerase (831 aa).

Residues Asp490, Lys560, and Asp738 contribute to the active site.

It belongs to the phage and mitochondrial RNA polymerase family.

The protein resides in the mitochondrion. The catalysed reaction is RNA(n) + a ribonucleoside 5'-triphosphate = RNA(n+1) + diphosphate. Functionally, DNA-dependent RNA polymerase catalyzes the transcription of DNA into RNA using the four ribonucleoside triphosphates as substrates. The polypeptide is Probable DNA-directed RNA polymerase (Gelasinospora sp. (strain G114)).